Consider the following 282-residue polypeptide: MCFLLLCLTLTLAGTGAVPTGPSIEIHSRIIGGWECDKHSQPWQALLTFTRKHNSVCGGVLVHSQWVLTAAHCIGDNYKVLLGLHDRSSEESTVQEARVSARFPHPLYNMTLLNLLLSHKMNLTFFYKTFLGADFSHDLMLLRLDQPVQLTDAVQVLDLPTQEPQVGSTCHVSGWGRTSQNYENSFVLPEKLQCVEFTLLSNNECSHAHMFKVTEAMLCAGHMEGGKDSCVGDSGGPLICDGVFQGIASWGSSPCGQQGRPGIYVKVFLYISWIQETIKAHS.

The signal sequence occupies residues 1–17; the sequence is MCFLLLCLTLTLAGTGA. Positions 18–29 are cleaved as a propeptide — activation peptide; sequence VPTGPSIEIHSR. Residues 30–279 form the Peptidase S1 domain; sequence IIGGWECDKH…YISWIQETIK (250 aa). 5 cysteine pairs are disulfide-bonded: C36-C194, C57-C73, C170-C240, C205-C219, and C230-C255. H72 (charge relay system) is an active-site residue. O-linked (GalNAc...) serine glycosylation is present at S100. N-linked (GlcNAc...) asparagine glycosylation is found at N109 and N122. D138 serves as the catalytic Charge relay system. Residue S234 is the Charge relay system of the active site.

Belongs to the peptidase S1 family. Kallikrein subfamily. Submaxillary and sublingual salivary glands.

It is found in the secreted. Its activity is regulated as follows. Strongly inhibited by aprotinin, moderately inhibited by secretory leukoprotease inhibitor, the Kunitz-type soybean trypsin inhibitor, and leupeptin, and not inhibited by urinary trypsin inhibitor or alpha-1 protease inhibitor. Has kallikrein-like activity, converts kininogens to kinins, and has dilatory effects on the blood vessel walls. Shows highest activity toward Pro-Phe-Arg-MCA and Boc-Val-Leu-Lys-MCA in vitro. Has preference for Arg and Lys in position P1 and hydrophobic residues in position P2. This Blarina brevicauda (Northern short-tailed shrew) protein is Blarina toxin (BTX).